A 197-amino-acid polypeptide reads, in one-letter code: Protein Hikeshi (197 aa).

The required for F-X-F-G repeats-nucleoporins recognition and nuclear import stretch occupies residues V18 to Y55. Residues Q124 to S134 are flexible linker region involved in nuclear import of HSP70 proteins.

This sequence belongs to the OPI10 family. As to quaternary structure, forms an asymmetric homodimer; required for binding and nuclear import of HSP70 proteins. Interacts with ATP-bound HSP70 proteins. Interacts with NUP62 and NUP153 (via F-X-F-G repeats). Interacts with HSPA8. Expressed in the central white matter of newborn and adult brain, particularly in regions where oligodendrocytes are generated.

It localises to the cytoplasm. It is found in the cytosol. Its subcellular location is the nucleus. Functionally, acts as a specific nuclear import carrier for HSP70 proteins following heat-shock stress: acts by mediating the nucleoporin-dependent translocation of ATP-bound HSP70 proteins into the nucleus. HSP70 proteins import is required to protect cells from heat shock damages. Does not translocate ADP-bound HSP70 proteins into the nucleus. May also be indirectly required for organization and/or function of the secretory apparatus in Club cells in lung. This Mus musculus (Mouse) protein is Protein Hikeshi.